A 1179-amino-acid chain; its full sequence is ATP-dependent helicase/deoxyribonuclease subunit B (1179 aa).

Belongs to the helicase family. AddB/RexB type 2 subfamily. As to quaternary structure, heterodimer of AddA and RexB. Requires Mg(2+) as cofactor.

Its function is as follows. The heterodimer acts as both an ATP-dependent DNA helicase and an ATP-dependent, dual-direction single-stranded exonuclease. Recognizes the chi site generating a DNA molecule suitable for the initiation of homologous recombination. This subunit has 5' -&gt; 3' nuclease activity but not helicase activity. The protein is ATP-dependent helicase/deoxyribonuclease subunit B of Lactobacillus delbrueckii subsp. bulgaricus (strain ATCC BAA-365 / Lb-18).